A 286-amino-acid polypeptide reads, in one-letter code: MTALLIDGNALSKTLRAQAAERAAALTARGHQPGLAVILVGANPASEVYVRNKIKACEDNGFFSLKDAYPDTLSEADLLARIDELNRDPKIHGILVQLPLPKHIDSHKVIEAIAPEKDVDGFHIANAGALMTGKPLFRPCTPYGVMKMFEAHDIPLQGANAVVIGRSNIVGKPMAMMLLDAGATVTICHSKTRDLAAHTRQADIVVAAVGKRNILTADMVKPGATVIDVGMNRDDAGKLCGDVDFAGVKEVASHITPVPGGVGPMTITMLLINTIEAAERAADAAA.

NADP(+) is bound by residues 165–167 and Ser190; that span reads GRS.

It belongs to the tetrahydrofolate dehydrogenase/cyclohydrolase family. As to quaternary structure, homodimer.

It carries out the reaction (6R)-5,10-methylene-5,6,7,8-tetrahydrofolate + NADP(+) = (6R)-5,10-methenyltetrahydrofolate + NADPH. It catalyses the reaction (6R)-5,10-methenyltetrahydrofolate + H2O = (6R)-10-formyltetrahydrofolate + H(+). The protein operates within one-carbon metabolism; tetrahydrofolate interconversion. Catalyzes the oxidation of 5,10-methylenetetrahydrofolate to 5,10-methenyltetrahydrofolate and then the hydrolysis of 5,10-methenyltetrahydrofolate to 10-formyltetrahydrofolate. The sequence is that of Bifunctional protein FolD from Burkholderia lata (strain ATCC 17760 / DSM 23089 / LMG 22485 / NCIMB 9086 / R18194 / 383).